A 216-amino-acid polypeptide reads, in one-letter code: Uracil phosphoribosyltransferase (216 aa).

GTP is bound by residues R32, R41, 75–78 (LGKI), and K77. R85 contacts 5-phospho-alpha-D-ribose 1-diphosphate. R102 serves as a coordination point for GTP. R110 is a binding site for 5-phospho-alpha-D-ribose 1-diphosphate. R131 is a GTP binding site. 5-phospho-alpha-D-ribose 1-diphosphate contacts are provided by residues D137 and 137 to 145 (DPMLATGGS). Y201 contributes to the D-ribose 5-phosphate binding site. Uracil-binding positions include L202 and 207-209 (GDF). D208 contributes to the 5-phospho-alpha-D-ribose 1-diphosphate binding site.

The protein belongs to the UPRTase family. It depends on Mg(2+) as a cofactor.

The enzyme catalyses UMP + diphosphate = 5-phospho-alpha-D-ribose 1-diphosphate + uracil. The protein operates within pyrimidine metabolism; UMP biosynthesis via salvage pathway; UMP from uracil: step 1/1. Its activity is regulated as follows. Allosterically activated by GTP. Functionally, catalyzes the conversion of uracil and 5-phospho-alpha-D-ribose 1-diphosphate (PRPP) to UMP and diphosphate. This is Uracil phosphoribosyltransferase (FUR1) from Lachancea kluyveri (Yeast).